Here is a 1389-residue protein sequence, read N- to C-terminus: DNA-directed RNA polymerase subunit beta (1389 aa).

This sequence belongs to the RNA polymerase beta chain family. As to quaternary structure, in plastids the minimal PEP RNA polymerase catalytic core is composed of four subunits: alpha, beta, beta', and beta''. When a (nuclear-encoded) sigma factor is associated with the core the holoenzyme is formed, which can initiate transcription.

The protein resides in the plastid. It is found in the chloroplast. It carries out the reaction RNA(n) + a ribonucleoside 5'-triphosphate = RNA(n+1) + diphosphate. Its function is as follows. DNA-dependent RNA polymerase catalyzes the transcription of DNA into RNA using the four ribonucleoside triphosphates as substrates. This chain is DNA-directed RNA polymerase subunit beta, found in Phaeodactylum tricornutum (strain CCAP 1055/1).